The chain runs to 501 residues: Endoglucanase 1 (501 aa).

The first 29 residues, 1–29, serve as a signal peptide directing secretion; that stretch reads MALYLSSSRLITFLSFILLLSNGFSSSSS. Catalysis depends on Asp96, which acts as the Nucleophile. Residues His422, Asp473, and Glu482 contribute to the active site.

The protein belongs to the glycosyl hydrolase 9 (cellulase E) family.

Its subcellular location is the secreted. It carries out the reaction Endohydrolysis of (1-&gt;4)-beta-D-glucosidic linkages in cellulose, lichenin and cereal beta-D-glucans.. This Arabidopsis thaliana (Mouse-ear cress) protein is Endoglucanase 1 (CEL2).